The chain runs to 217 residues: UPF0502 protein KPK_3478 (217 aa).

Belongs to the UPF0502 family.

The chain is UPF0502 protein KPK_3478 from Klebsiella pneumoniae (strain 342).